A 710-amino-acid polypeptide reads, in one-letter code: Methionine--tRNA ligase (710 aa).

Residues 26–36 (PYANGQIHIGH) carry the 'HIGH' region motif. Zn(2+) contacts are provided by cysteine 157, cysteine 160, cysteine 170, and cysteine 173. A 'KMSKS' region motif is present at residues 347-351 (KMSKS). Residue lysine 350 coordinates ATP. Positions 604–710 (DFAKIDLRIA…SGAKPGMRVK (107 aa)) constitute a tRNA-binding domain.

It belongs to the class-I aminoacyl-tRNA synthetase family. MetG type 1 subfamily. As to quaternary structure, homodimer. Zn(2+) is required as a cofactor.

It is found in the cytoplasm. The enzyme catalyses tRNA(Met) + L-methionine + ATP = L-methionyl-tRNA(Met) + AMP + diphosphate. Is required not only for elongation of protein synthesis but also for the initiation of all mRNA translation through initiator tRNA(fMet) aminoacylation. This Paraburkholderia xenovorans (strain LB400) protein is Methionine--tRNA ligase.